We begin with the raw amino-acid sequence, 78 residues long: UPF0369 protein RF_1112 (78 aa).

Belongs to the SDHAF4 family.

In Rickettsia felis (strain ATCC VR-1525 / URRWXCal2) (Rickettsia azadi), this protein is UPF0369 protein RF_1112.